Reading from the N-terminus, the 275-residue chain is MHLWFTEKQNDNFAISYRVNETLHTETTPFQHLAVLDTVPFGRTLVLDGIVQTSVVDEYVYHEMITHVPLNTHPDPRRVLIVGGGDGGTLREVTKHPSVEKATLVEIDERVIAASKKYLPELACGFDSPKAEVVIGDGIKYVAEHKKTFDLVIVDSTDPIGPAVGLFSLEFYRSIYEALKDEGLFVAQTESPYFNTDLILRIYRDIAGIFPLARTYWACIPTYPGAMWSFTIGSKKHDPAQVAPEKIREHATRYYTPEIHRASFAMPRFLADRFR.

A PABS domain is found at 2–235 (HLWFTEKQND…AMWSFTIGSK (234 aa)). Q31 contributes to the S-methyl-5'-thioadenosine binding site. H62 and D86 together coordinate spermidine. S-methyl-5'-thioadenosine contacts are provided by residues E106 and 137-138 (DG). D155 functions as the Proton acceptor in the catalytic mechanism. 155 to 158 (DSTD) is a binding site for spermidine. P162 contributes to the S-methyl-5'-thioadenosine binding site.

The protein belongs to the spermidine/spermine synthase family. As to quaternary structure, homodimer or homotetramer.

It localises to the cytoplasm. It catalyses the reaction S-adenosyl 3-(methylsulfanyl)propylamine + putrescine = S-methyl-5'-thioadenosine + spermidine + H(+). Its pathway is amine and polyamine biosynthesis; spermidine biosynthesis; spermidine from putrescine: step 1/1. In terms of biological role, catalyzes the irreversible transfer of a propylamine group from the amino donor S-adenosylmethioninamine (decarboxy-AdoMet) to putrescine (1,4-diaminobutane) to yield spermidine. The chain is Polyamine aminopropyltransferase from Desulforudis audaxviator (strain MP104C).